A 518-amino-acid chain; its full sequence is Glutamate--cysteine ligase (518 aa).

It belongs to the glutamate--cysteine ligase type 1 family. Type 1 subfamily.

It carries out the reaction L-cysteine + L-glutamate + ATP = gamma-L-glutamyl-L-cysteine + ADP + phosphate + H(+). It functions in the pathway sulfur metabolism; glutathione biosynthesis; glutathione from L-cysteine and L-glutamate: step 1/2. This Buchnera aphidicola subsp. Acyrthosiphon pisum (strain 5A) protein is Glutamate--cysteine ligase.